A 385-amino-acid polypeptide reads, in one-letter code: Acetylornithine aminotransferase (385 aa).

Pyridoxal 5'-phosphate is bound by residues 94 to 95 (GT) and Phe-126. Arg-129 serves as a coordination point for N(2)-acetyl-L-ornithine. 211–214 (DEVQ) is a pyridoxal 5'-phosphate binding site. Residue Lys-240 is modified to N6-(pyridoxal phosphate)lysine. Thr-267 serves as a coordination point for N(2)-acetyl-L-ornithine. Residue Thr-268 participates in pyridoxal 5'-phosphate binding.

The protein belongs to the class-III pyridoxal-phosphate-dependent aminotransferase family. ArgD subfamily. In terms of assembly, homodimer. Pyridoxal 5'-phosphate serves as cofactor.

Its subcellular location is the cytoplasm. The catalysed reaction is N(2)-acetyl-L-ornithine + 2-oxoglutarate = N-acetyl-L-glutamate 5-semialdehyde + L-glutamate. Its pathway is amino-acid biosynthesis; L-arginine biosynthesis; N(2)-acetyl-L-ornithine from L-glutamate: step 4/4. This Thermotoga maritima (strain ATCC 43589 / DSM 3109 / JCM 10099 / NBRC 100826 / MSB8) protein is Acetylornithine aminotransferase.